Here is a 188-residue protein sequence, read N- to C-terminus: Acireductone dioxygenase 1 (188 aa).

Fe(2+)-binding residues include His-90, His-92, Glu-96, and His-135. 4 residues coordinate Ni(2+): His-90, His-92, Glu-96, and His-135.

It belongs to the acireductone dioxygenase (ARD) family. It depends on Fe(2+) as a cofactor. The cofactor is Ni(2+).

The protein resides in the cytoplasm. It localises to the nucleus. The catalysed reaction is 1,2-dihydroxy-5-(methylsulfanyl)pent-1-en-3-one + O2 = 4-methylsulfanyl-2-oxobutanoate + formate + 2 H(+). It carries out the reaction 1,2-dihydroxy-5-(methylsulfanyl)pent-1-en-3-one + O2 = 3-(methylsulfanyl)propanoate + CO + formate + 2 H(+). Its pathway is amino-acid biosynthesis; L-methionine biosynthesis via salvage pathway; L-methionine from S-methyl-5-thio-alpha-D-ribose 1-phosphate: step 5/6. Functionally, catalyzes 2 different reactions between oxygen and the acireductone 1,2-dihydroxy-3-keto-5-methylthiopentene (DHK-MTPene) depending upon the metal bound in the active site. Fe-containing acireductone dioxygenase (Fe-ARD) produces formate and 2-keto-4-methylthiobutyrate (KMTB), the alpha-ketoacid precursor of methionine in the methionine recycle pathway. Ni-containing acireductone dioxygenase (Ni-ARD) produces methylthiopropionate, carbon monoxide and formate, and does not lie on the methionine recycle pathway. This Vitis vinifera (Grape) protein is Acireductone dioxygenase 1.